The following is a 188-amino-acid chain: Photosystem I assembly protein Ycf4 (188 aa).

The next 2 membrane-spanning stretches (helical) occupy residues 26–46 (IWWG…GLSS) and 70–90 (LLFY…TIIL).

This sequence belongs to the Ycf4 family.

It localises to the cellular thylakoid membrane. In terms of biological role, seems to be required for the assembly of the photosystem I complex. This Rippkaea orientalis (strain PCC 8801 / RF-1) (Cyanothece sp. (strain PCC 8801)) protein is Photosystem I assembly protein Ycf4.